The chain runs to 326 residues: MATH domain and coiled-coil domain-containing protein At3g58370 (326 aa).

Residues 7 to 133 form the MATH domain; that stretch reads DNKFTWVIKN…NGEVKIVVEI (127 aa). The stretch at 259–312 forms a coiled coil; the sequence is LRLDWLEKKLAEVKAKKKKVETGKARLQRAEEELQKLNQKCLELKAFLEKENAD.

This Arabidopsis thaliana (Mouse-ear cress) protein is MATH domain and coiled-coil domain-containing protein At3g58370.